Consider the following 228-residue polypeptide: 7-cyano-7-deazaguanine synthase (228 aa).

Residue 8-18 coordinates ATP; sequence LSGGLDSTTCL. The Zn(2+) site is built by C188, C198, C201, and C204.

This sequence belongs to the QueC family. It depends on Zn(2+) as a cofactor.

The enzyme catalyses 7-carboxy-7-deazaguanine + NH4(+) + ATP = 7-cyano-7-deazaguanine + ADP + phosphate + H2O + H(+). The protein operates within purine metabolism; 7-cyano-7-deazaguanine biosynthesis. Its function is as follows. Catalyzes the ATP-dependent conversion of 7-carboxy-7-deazaguanine (CDG) to 7-cyano-7-deazaguanine (preQ(0)). The chain is 7-cyano-7-deazaguanine synthase from Legionella pneumophila subsp. pneumophila (strain Philadelphia 1 / ATCC 33152 / DSM 7513).